Here is a 313-residue protein sequence, read N- to C-terminus: Transaldolase (313 aa).

Lysine 125 functions as the Schiff-base intermediate with substrate in the catalytic mechanism.

It belongs to the transaldolase family. Type 1 subfamily. As to quaternary structure, homodimer.

The protein resides in the cytoplasm. It catalyses the reaction D-sedoheptulose 7-phosphate + D-glyceraldehyde 3-phosphate = D-erythrose 4-phosphate + beta-D-fructose 6-phosphate. The protein operates within carbohydrate degradation; pentose phosphate pathway; D-glyceraldehyde 3-phosphate and beta-D-fructose 6-phosphate from D-ribose 5-phosphate and D-xylulose 5-phosphate (non-oxidative stage): step 2/3. Transaldolase is important for the balance of metabolites in the pentose-phosphate pathway. The sequence is that of Transaldolase from Pseudomonas syringae pv. syringae (strain B728a).